The chain runs to 281 residues: Glutamate racemase (281 aa).

Substrate is bound by residues aspartate 13–serine 14 and tyrosine 45–glycine 46. Catalysis depends on cysteine 76, which acts as the Proton donor/acceptor. Residue asparagine 77–threonine 78 coordinates substrate. Residue cysteine 185 is the Proton donor/acceptor of the active site. Threonine 186–histidine 187 is a binding site for substrate.

Belongs to the aspartate/glutamate racemases family.

The catalysed reaction is L-glutamate = D-glutamate. Its pathway is cell wall biogenesis; peptidoglycan biosynthesis. Functionally, provides the (R)-glutamate required for cell wall biosynthesis. The polypeptide is Glutamate racemase (Rippkaea orientalis (strain PCC 8801 / RF-1) (Cyanothece sp. (strain PCC 8801))).